A 744-amino-acid polypeptide reads, in one-letter code: 3-isopropylmalate dehydratase (744 aa).

3 residues coordinate [4Fe-4S] cluster: Cys341, Cys401, and Cys404.

Belongs to the aconitase/IPM isomerase family. As to quaternary structure, monomer. It depends on [4Fe-4S] cluster as a cofactor.

The enzyme catalyses (2R,3S)-3-isopropylmalate = (2S)-2-isopropylmalate. It participates in amino-acid biosynthesis; L-leucine biosynthesis; L-leucine from 3-methyl-2-oxobutanoate: step 2/4. Catalyzes the isomerization between 2-isopropylmalate and 3-isopropylmalate, via the formation of 2-isopropylmaleate. This chain is 3-isopropylmalate dehydratase (leu1), found in Phycomyces blakesleeanus (strain ATCC 8743b / DSM 1359 / FGSC 10004 / NBRC 33097 / NRRL 1555).